A 584-amino-acid chain; its full sequence is Long-chain-fatty-acid--AMP ligase FadD26 (584 aa).

It belongs to the ATP-dependent AMP-binding enzyme family.

It catalyses the reaction holo-[(phenol)carboxyphthiodiolenone synthase] + a long-chain fatty acid + ATP = a long-chain fatty acyl-[(phenol)carboxyphthiodiolenone synthase] + AMP + diphosphate. It carries out the reaction eicosanoate + holo-[(phenol)carboxyphthiodiolenone synthase] + ATP = icosanoyl-[(phenol)carboxyphthiodiolenone synthase] + AMP + diphosphate. The catalysed reaction is holo-[(phenol)carboxyphthiodiolenone synthase] + docosanoate + ATP = docosanoyl-[(phenol)carboxyphthiodiolenone synthase] + AMP + diphosphate. It functions in the pathway lipid metabolism; fatty acid biosynthesis. Catalyzes the activation of long-chain fatty acids as acyl-adenylates (acyl-AMP), which are then transferred to the multifunctional polyketide synthase PpsA for further chain extension. Catalyzes the adenylation of the long-chain fatty acids eicosanoate (C20) or docosanoate (C22), and potentially the very-long-chain fatty acid lignocerate (C24). Involved in the biosynthesis of phthiocerol dimycocerosate (DIM A) and phthiodiolone dimycocerosate (DIM B). The protein is Long-chain-fatty-acid--AMP ligase FadD26 of Mycobacterium marinum (strain ATCC BAA-535 / M).